The chain runs to 699 residues: tRNA 5-methylaminomethyl-2-thiouridine biosynthesis bifunctional protein MnmC (699 aa).

Residues 1 to 247 (MPAVSRPLPP…KREMLCGEIA (247 aa)) are tRNA (mnm(5)s(2)U34)-methyltransferase. The tract at residues 275 to 699 (IGAGLAGTSV…QPSPTTTETP (425 aa)) is FAD-dependent cmnm(5)s(2)U34 oxidoreductase. A disordered region spans residues 675–699 (RGNATLSTSSPNDDAQPSPTTTETP).

It in the N-terminal section; belongs to the methyltransferase superfamily. tRNA (mnm(5)s(2)U34)-methyltransferase family. The protein in the C-terminal section; belongs to the DAO family. It depends on FAD as a cofactor.

It localises to the cytoplasm. It catalyses the reaction 5-aminomethyl-2-thiouridine(34) in tRNA + S-adenosyl-L-methionine = 5-methylaminomethyl-2-thiouridine(34) in tRNA + S-adenosyl-L-homocysteine + H(+). In terms of biological role, catalyzes the last two steps in the biosynthesis of 5-methylaminomethyl-2-thiouridine (mnm(5)s(2)U) at the wobble position (U34) in tRNA. Catalyzes the FAD-dependent demodification of cmnm(5)s(2)U34 to nm(5)s(2)U34, followed by the transfer of a methyl group from S-adenosyl-L-methionine to nm(5)s(2)U34, to form mnm(5)s(2)U34. This Chromohalobacter salexigens (strain ATCC BAA-138 / DSM 3043 / CIP 106854 / NCIMB 13768 / 1H11) protein is tRNA 5-methylaminomethyl-2-thiouridine biosynthesis bifunctional protein MnmC.